Consider the following 477-residue polypeptide: Bifunctional protein HldE (477 aa).

Residues 1–318 (MKVTLPEFER…ENAVRGRAET (318 aa)) form a ribokinase region. At lysine 179 the chain carries N6-acetyllysine. 195-198 (NLSE) is an ATP binding site. The active site involves aspartate 264. The segment at 344 to 477 (MTNGVFDILH…IKKIQQDKKG (134 aa)) is cytidylyltransferase.

This sequence in the N-terminal section; belongs to the carbohydrate kinase PfkB family. In the C-terminal section; belongs to the cytidylyltransferase family. As to quaternary structure, homodimer.

The enzyme catalyses D-glycero-beta-D-manno-heptose 7-phosphate + ATP = D-glycero-beta-D-manno-heptose 1,7-bisphosphate + ADP + H(+). It catalyses the reaction D-glycero-beta-D-manno-heptose 1-phosphate + ATP + H(+) = ADP-D-glycero-beta-D-manno-heptose + diphosphate. Its pathway is nucleotide-sugar biosynthesis; ADP-L-glycero-beta-D-manno-heptose biosynthesis; ADP-L-glycero-beta-D-manno-heptose from D-glycero-beta-D-manno-heptose 7-phosphate: step 1/4. It functions in the pathway nucleotide-sugar biosynthesis; ADP-L-glycero-beta-D-manno-heptose biosynthesis; ADP-L-glycero-beta-D-manno-heptose from D-glycero-beta-D-manno-heptose 7-phosphate: step 3/4. Its function is as follows. Catalyzes the phosphorylation of D-glycero-D-manno-heptose 7-phosphate at the C-1 position to selectively form D-glycero-beta-D-manno-heptose-1,7-bisphosphate. In terms of biological role, catalyzes the ADP transfer from ATP to D-glycero-beta-D-manno-heptose 1-phosphate, yielding ADP-D-glycero-beta-D-manno-heptose. This chain is Bifunctional protein HldE, found in Shigella dysenteriae serotype 1 (strain Sd197).